We begin with the raw amino-acid sequence, 192 residues long: CASP-like protein 2U1 (192 aa).

The Cytoplasmic segment spans residues 1 to 11; that stretch reads MASRKQGAREG. The chain crosses the membrane as a helical span at residues 12-32; that stretch reads LWSMGVRLLTTLLCITSLILL. Residues 33 to 58 are Extracellular-facing; the sequence is LKAKQTVRRALGLGYIAQTVKYSDTS. A helical transmembrane segment spans residues 59-79; the sequence is GFIYLVYINILVAAYGLIVFV. Over 80–96 the chain is Cytoplasmic; that stretch reads SLIPSALGKSCSGKCSR. A helical membrane pass occupies residues 97-117; sequence WTIFVLDQVFAYVLLSAVSAA. Topologically, residues 118–145 are extracellular; sequence TEVLYLADKGMSKTQWEALCPTYGFFCH. A helical transmembrane segment spans residues 146–166; the sequence is MVSASVAIGSVAVVLLAVLSV. The Cytoplasmic portion of the chain corresponds to 167-192; the sequence is SSAQSLFHNFYTRALYTTKMRHSSLT.

The protein belongs to the Casparian strip membrane proteins (CASP) family. As to quaternary structure, homodimer and heterodimers.

Its subcellular location is the cell membrane. In Adiantum capillus-veneris (Maidenhair fern), this protein is CASP-like protein 2U1.